Reading from the N-terminus, the 345-residue chain is NADPH dehydrogenase (345 aa).

An FMN-binding site is contributed by 23–26 (SPMC). Residue tyrosine 28 participates in substrate binding. FMN-binding residues include alanine 60 and glutamine 102. 164-167 (HGAH) contacts substrate. FMN-binding positions include arginine 215 and 307 to 308 (GR).

This sequence belongs to the NADH:flavin oxidoreductase/NADH oxidase family. NamA subfamily. In terms of assembly, homotetramer. Requires FMN as cofactor.

The catalysed reaction is A + NADPH + H(+) = AH2 + NADP(+). In terms of biological role, catalyzes the reduction of the double bond of an array of alpha,beta-unsaturated aldehydes and ketones. It also reduces the nitro group of nitroester and nitroaromatic compounds. It could have a role in detoxification processes. The sequence is that of NADPH dehydrogenase from Bacillus thuringiensis subsp. konkukian (strain 97-27).